The chain runs to 485 residues: Aspartyl/glutamyl-tRNA(Asn/Gln) amidotransferase subunit B (485 aa).

The protein belongs to the GatB/GatE family. GatB subfamily. Heterotrimer of A, B and C subunits.

It catalyses the reaction L-glutamyl-tRNA(Gln) + L-glutamine + ATP + H2O = L-glutaminyl-tRNA(Gln) + L-glutamate + ADP + phosphate + H(+). The enzyme catalyses L-aspartyl-tRNA(Asn) + L-glutamine + ATP + H2O = L-asparaginyl-tRNA(Asn) + L-glutamate + ADP + phosphate + 2 H(+). Allows the formation of correctly charged Asn-tRNA(Asn) or Gln-tRNA(Gln) through the transamidation of misacylated Asp-tRNA(Asn) or Glu-tRNA(Gln) in organisms which lack either or both of asparaginyl-tRNA or glutaminyl-tRNA synthetases. The reaction takes place in the presence of glutamine and ATP through an activated phospho-Asp-tRNA(Asn) or phospho-Glu-tRNA(Gln). This chain is Aspartyl/glutamyl-tRNA(Asn/Gln) amidotransferase subunit B, found in Cupriavidus pinatubonensis (strain JMP 134 / LMG 1197) (Cupriavidus necator (strain JMP 134)).